A 369-amino-acid chain; its full sequence is Coproporphyrin III ferrochelatase (369 aa).

Fe-coproporphyrin III is bound by residues Ser-61 and Tyr-130. Residues His-197 and Glu-286 each contribute to the Fe(2+) site.

The protein belongs to the ferrochelatase family.

It localises to the cytoplasm. The enzyme catalyses Fe-coproporphyrin III + 2 H(+) = coproporphyrin III + Fe(2+). It participates in porphyrin-containing compound metabolism; protoheme biosynthesis. Its function is as follows. Involved in coproporphyrin-dependent heme b biosynthesis. Catalyzes the insertion of ferrous iron into coproporphyrin III to form Fe-coproporphyrin III. The chain is Coproporphyrin III ferrochelatase from Corynebacterium diphtheriae (strain ATCC 700971 / NCTC 13129 / Biotype gravis).